Here is a 211-residue protein sequence, read N- to C-terminus: Small ribosomal subunit protein uS3c (211 aa).

One can recognise a KH type-2 domain in the interval 39 to 109; sequence IREFAESRLP…NVALYVTKTQ (71 aa).

This sequence belongs to the universal ribosomal protein uS3 family. Part of the 30S ribosomal subunit.

It localises to the plastid. The protein resides in the chloroplast. This Ostreococcus tauri protein is Small ribosomal subunit protein uS3c (rps3).